The sequence spans 143 residues: Large ribosomal subunit protein eL28z (143 aa).

This sequence belongs to the eukaryotic ribosomal protein eL28 family. In terms of assembly, component of the large ribosomal subunit. Expressed in seedlings, roots, stems, leaves, inflorescences and siliques.

The protein localises to the cytoplasm. It localises to the nucleus. Its subcellular location is the nucleolus. The protein resides in the nucleoplasm. Functionally, component of the large ribosomal subunit. Essential in leaf polarity establishment, probably having a role for translation in leaf dorsoventral patterning to specify leaf adaxial identity. The protein is Large ribosomal subunit protein eL28z of Arabidopsis thaliana (Mouse-ear cress).